Consider the following 159-residue polypeptide: Small ribosomal subunit protein bS16 (159 aa).

Positions 102-119 (GIPEAAEEAPATESVAEA) are enriched in low complexity. The tract at residues 102–159 (GIPEAAEEAPATESVAEAEVADVPESELSEAATETAAAELSPPEAEVEKPQVEEAVEA) is disordered. Positions 120-129 (EVADVPESEL) are enriched in acidic residues. The segment covering 130-145 (SEAATETAAAELSPPE) has biased composition (low complexity).

It belongs to the bacterial ribosomal protein bS16 family.

In Synechococcus sp. (strain JA-2-3B'a(2-13)) (Cyanobacteria bacterium Yellowstone B-Prime), this protein is Small ribosomal subunit protein bS16.